Here is a 624-residue protein sequence, read N- to C-terminus: Steryl-sulfatase (624 aa).

The N-terminal stretch at 1–22 (MPRPRPLLLAVMAATLADIILA) is a signal peptide. At 24-192 (DPAPAGPAPR…GTVFGPALRV (169 aa)) the chain is on the lumenal side. Ca(2+)-binding residues include D43 and D44. N55 carries N-linked (GlcNAc...) asparagine glycosylation. Ca(2+) is bound at residue C83. The active-site Nucleophile is the C83. C83 is subject to 3-oxoalanine (Cys). H144 is an active-site residue. 2 disulfide bridges follow: C149-C156 and C178-C250. A helical membrane pass occupies residues 193–216 (FAAGPLAALGASLAAMAAARWAGL). The Cytoplasmic segment spans residues 217 to 220 (ARVP). Residues 221–242 (GWALAGTAAAMLAVGGPRSASC) traverse the membrane as a helical segment. Topologically, residues 243-624 (LGFRPANCFL…ATTRTQATPR (382 aa)) are lumenal. Ca(2+)-binding residues include D350 and H351. Intrachain disulfides connect C454/C495 and C487/C493. N465 carries N-linked (GlcNAc...) asparagine glycosylation. Positions 572 to 624 (GGAGGGAGAQDDSGHAHGDGSHAHDDPGHAQDRGDDDAHYGGHATTRTQATPR) are disordered. Positions 583 to 611 (DSGHAHGDGSHAHDDPGHAQDRGDDDAHY) are enriched in basic and acidic residues.

Belongs to the sulfatase family. In terms of assembly, homodimer. Ca(2+) is required as a cofactor. In terms of processing, the conversion to 3-oxoalanine (also known as C-formylglycine, FGly), of a serine or cysteine residue in prokaryotes and of a cysteine residue in eukaryotes, is critical for catalytic activity.

It localises to the microsome membrane. Its subcellular location is the endoplasmic reticulum membrane. The enzyme catalyses dehydroepiandrosterone 3-sulfate + H2O = 3beta-hydroxyandrost-5-en-17-one + sulfate + H(+). It carries out the reaction estrone 3-sulfate + H2O = estrone + sulfate + H(+). In terms of biological role, catalyzes the conversion of sulfated steroid precursors, such as dehydroepiandrosterone sulfate (DHEA-S) and estrone sulfate to the free steroid. In Mus musculus (Mouse), this protein is Steryl-sulfatase (Sts).